A 405-amino-acid polypeptide reads, in one-letter code: UDP-N-acetylglucosamine--N-acetylmuramyl-(pentapeptide) pyrophosphoryl-undecaprenol N-acetylglucosamine transferase (405 aa).

Residues 11–13 (TGG), Asn127, Arg168, Ser191, Ile248, and Gln293 each bind UDP-N-acetyl-alpha-D-glucosamine.

The protein belongs to the glycosyltransferase 28 family. MurG subfamily.

It is found in the cell inner membrane. The enzyme catalyses di-trans,octa-cis-undecaprenyl diphospho-N-acetyl-alpha-D-muramoyl-L-alanyl-D-glutamyl-meso-2,6-diaminopimeloyl-D-alanyl-D-alanine + UDP-N-acetyl-alpha-D-glucosamine = di-trans,octa-cis-undecaprenyl diphospho-[N-acetyl-alpha-D-glucosaminyl-(1-&gt;4)]-N-acetyl-alpha-D-muramoyl-L-alanyl-D-glutamyl-meso-2,6-diaminopimeloyl-D-alanyl-D-alanine + UDP + H(+). Its pathway is cell wall biogenesis; peptidoglycan biosynthesis. Functionally, cell wall formation. Catalyzes the transfer of a GlcNAc subunit on undecaprenyl-pyrophosphoryl-MurNAc-pentapeptide (lipid intermediate I) to form undecaprenyl-pyrophosphoryl-MurNAc-(pentapeptide)GlcNAc (lipid intermediate II). This Sorangium cellulosum (strain So ce56) (Polyangium cellulosum (strain So ce56)) protein is UDP-N-acetylglucosamine--N-acetylmuramyl-(pentapeptide) pyrophosphoryl-undecaprenol N-acetylglucosamine transferase.